We begin with the raw amino-acid sequence, 134 residues long: Holo-[acyl-carrier-protein] synthase (134 aa).

Mg(2+) contacts are provided by Asp8 and Glu58.

This sequence belongs to the P-Pant transferase superfamily. AcpS family. It depends on Mg(2+) as a cofactor.

It localises to the cytoplasm. It catalyses the reaction apo-[ACP] + CoA = holo-[ACP] + adenosine 3',5'-bisphosphate + H(+). Transfers the 4'-phosphopantetheine moiety from coenzyme A to a Ser of acyl-carrier-protein. This Ruminiclostridium cellulolyticum (strain ATCC 35319 / DSM 5812 / JCM 6584 / H10) (Clostridium cellulolyticum) protein is Holo-[acyl-carrier-protein] synthase.